The chain runs to 433 residues: Pyrimidine-nucleoside phosphorylase (433 aa).

A phosphate-binding site is contributed by 81–83 (KHS). Gly88 and Thr90 together coordinate K(+). Phosphate is bound by residues Thr92, 108–110 (KMS), and Thr120. Residues Arg168 and Lys187 each coordinate substrate. Residues Leu243, Ala246, and Glu255 each contribute to the K(+) site.

The protein belongs to the thymidine/pyrimidine-nucleoside phosphorylase family. In terms of assembly, homodimer. It depends on K(+) as a cofactor.

It carries out the reaction uridine + phosphate = alpha-D-ribose 1-phosphate + uracil. It catalyses the reaction thymidine + phosphate = 2-deoxy-alpha-D-ribose 1-phosphate + thymine. The catalysed reaction is 2'-deoxyuridine + phosphate = 2-deoxy-alpha-D-ribose 1-phosphate + uracil. Its function is as follows. Catalyzes phosphorolysis of the pyrimidine nucleosides uridine, thymidine and 2'-deoxyuridine with the formation of the corresponding pyrimidine base and ribose-1-phosphate. This Geobacillus stearothermophilus (Bacillus stearothermophilus) protein is Pyrimidine-nucleoside phosphorylase (pdp).